The sequence spans 705 residues: Elongation factor G (705 aa).

One can recognise a tr-type G domain in the interval 8 to 294 (ELYRNFGIMA…SVIDYLPSPL (287 aa)). Residues 17–24 (AHIDAGKT), 92–96 (DTPGH), and 146–149 (NKMD) contribute to the GTP site.

It belongs to the TRAFAC class translation factor GTPase superfamily. Classic translation factor GTPase family. EF-G/EF-2 subfamily.

The protein resides in the cytoplasm. Functionally, catalyzes the GTP-dependent ribosomal translocation step during translation elongation. During this step, the ribosome changes from the pre-translocational (PRE) to the post-translocational (POST) state as the newly formed A-site-bound peptidyl-tRNA and P-site-bound deacylated tRNA move to the P and E sites, respectively. Catalyzes the coordinated movement of the two tRNA molecules, the mRNA and conformational changes in the ribosome. In Cereibacter sphaeroides (strain KD131 / KCTC 12085) (Rhodobacter sphaeroides), this protein is Elongation factor G.